Consider the following 102-residue polypeptide: Spexin prohormone 1 (102 aa).

Positions 1–26 (MKDLRTLAAYALALLLLATFVSYSRS) are cleaved as a signal peptide. Positions 27 to 35 (APMGSFQRR) are excised as a propeptide. At Q49 the chain carries Glutamine amide. The propeptide occupies 50–102 (GRRFVSEDRNEGDLYDTIRLESQSQNTENLSISKAAAFLLNVLQQARDEGEPY).

It belongs to the spexin family. Expressed in the anterior hypothalamus, ventromedial thalamic nucleus and medial longitudinal fasciculus of the brain (at protein level). Widely expressed. Expressed predominantly in the spleen, kidney, liver and testis. Expressed in olfactory bulb, pituitary, telencephalon, diencephalons, spinal cord, optic tectum, cerebellum and hypothalamus of the brain.

It localises to the secreted. The protein resides in the extracellular space. It is found in the cytoplasmic vesicle. Its subcellular location is the secretory vesicle. Functionally, plays a role in the regulation of food intake and body weight and in reproduction. May also play a role as a central modulator of cardiovascular and renal function and nociception. Its function is as follows. Brain administration of the peptide inhibits food consumption. May function as a satiety factor for feeding control. Involved in the negative regulation of the reproductive axis by inhibiting luteinizing hormone secretion from pituitary cells. This chain is Spexin prohormone 1 (spx), found in Carassius auratus (Goldfish).